The chain runs to 173 residues: Crossover junction endodeoxyribonuclease RuvC (173 aa).

Catalysis depends on residues aspartate 8, glutamate 67, and aspartate 139. 3 residues coordinate Mg(2+): aspartate 8, glutamate 67, and aspartate 139.

Belongs to the RuvC family. Homodimer which binds Holliday junction (HJ) DNA. The HJ becomes 2-fold symmetrical on binding to RuvC with unstacked arms; it has a different conformation from HJ DNA in complex with RuvA. In the full resolvosome a probable DNA-RuvA(4)-RuvB(12)-RuvC(2) complex forms which resolves the HJ. It depends on Mg(2+) as a cofactor.

Its subcellular location is the cytoplasm. The catalysed reaction is Endonucleolytic cleavage at a junction such as a reciprocal single-stranded crossover between two homologous DNA duplexes (Holliday junction).. The RuvA-RuvB-RuvC complex processes Holliday junction (HJ) DNA during genetic recombination and DNA repair. Endonuclease that resolves HJ intermediates. Cleaves cruciform DNA by making single-stranded nicks across the HJ at symmetrical positions within the homologous arms, yielding a 5'-phosphate and a 3'-hydroxyl group; requires a central core of homology in the junction. The consensus cleavage sequence is 5'-(A/T)TT(C/G)-3'. Cleavage occurs on the 3'-side of the TT dinucleotide at the point of strand exchange. HJ branch migration catalyzed by RuvA-RuvB allows RuvC to scan DNA until it finds its consensus sequence, where it cleaves and resolves the cruciform DNA. The sequence is that of Crossover junction endodeoxyribonuclease RuvC from Vibrio vulnificus (strain YJ016).